We begin with the raw amino-acid sequence, 1199 residues long: Tubulin monoglutamylase TTLL4 (1199 aa).

Positions 1-25 (MASAGTQHYSIGLRQKNSFKQSGPS) are enriched in polar residues. 3 disordered regions span residues 1-43 (MASA…RVWP), 472-517 (IQLG…ELVD), and 525-544 (RDEN…SAVS). The segment covering 477–495 (SEKERPEEARELDSSDRDI) has biased composition (basic and acidic residues). Acidic residues predominate over residues 506 to 517 (AETEDTEEELVD). Residues 604-947 (RKLLRWKMST…VLPNAEDIIS (344 aa)) form the TTL domain. A Phosphoserine modification is found at Ser-691. ATP-binding positions include Lys-721, 727-728 (RG), 749-752 (QRYL), and 762-764 (KFD). Position 727 (Arg-727) interacts with a protein. Arg-788 contributes to the L-glutamate binding site. Residue 809 to 810 (TN) participates in ATP binding. L-glutamate-binding residues include Tyr-811, Ser-812, and Lys-833. Positions 893, 906, and 908 each coordinate Mg(2+). The segment at 918–1029 (PLDISIKGQM…RGQFERIFPS (112 aa)) is c-MTBD region. Lys-924 is a binding site for L-glutamate. The span at 1130–1141 (GTTPKSKKTQAG) shows a compositional bias: polar residues. A disordered region spans residues 1130-1199 (GTTPKSKKTQ…ISDSLLAVSP (70 aa)). A compositionally biased stretch (basic and acidic residues) spans 1151–1160 (SSKDSEDTSK). Residues 1164–1192 (LSTQTLPVIKCSGQTSRLSASSTFQSISD) show a composition bias toward polar residues.

The protein belongs to the tubulin--tyrosine ligase family. Requires Mg(2+) as cofactor.

It is found in the cytoplasm. Its subcellular location is the cell projection. The protein localises to the cilium. The protein resides in the cytoskeleton. It localises to the cilium basal body. It carries out the reaction L-glutamyl-[protein] + L-glutamate + ATP = gamma-L-glutamyl-L-glutamyl-[protein] + ADP + phosphate + H(+). Monoglutamylase which modifies both tubulin and non-tubulin proteins, adding a single glutamate on the gamma-carboxyl group of specific glutamate residues of target proteins. Involved in the side-chain initiation step of the polyglutamylation reaction but not in the elongation step. Preferentially modifies beta-tail tubulin over the alpha-tubulin. Monoglutamylates nucleosome assembly proteins NAP1L1 and NAP1L4. Monoglutamylates nucleotidyltransferase CGAS, leading to inhibition of CGAS catalytic activity, thereby preventing antiviral defense function. Involved in KLF4 glutamylation which impedes its ubiquitination, thereby leading to somatic cell reprogramming, pluripotency maintenance and embryogenesis. This is Tubulin monoglutamylase TTLL4 from Homo sapiens (Human).